Here is a 192-residue protein sequence, read N- to C-terminus: Ribosome maturation factor RimM (192 aa).

Residues 99–186 (ADEYHVSELV…RIEIAPPPGL (88 aa)) enclose the PRC barrel domain.

It belongs to the RimM family. Binds ribosomal protein uS19.

It is found in the cytoplasm. Its function is as follows. An accessory protein needed during the final step in the assembly of 30S ribosomal subunit, possibly for assembly of the head region. Essential for efficient processing of 16S rRNA. May be needed both before and after RbfA during the maturation of 16S rRNA. It has affinity for free ribosomal 30S subunits but not for 70S ribosomes. The polypeptide is Ribosome maturation factor RimM (Microcystis aeruginosa (strain NIES-843 / IAM M-2473)).